The sequence spans 316 residues: Lipoyl synthase (316 aa).

Residues 1–15 are compositionally biased toward basic and acidic residues; the sequence is MKARNESMSKGEYKT. Residues 1–33 are disordered; that stretch reads MKARNESMSKGEYKTKSLKNRPDPTQPKLKKPS. [4Fe-4S] cluster contacts are provided by Cys-64, Cys-69, Cys-75, Cys-90, Cys-94, Cys-97, and Ser-304. The region spanning 76-293 is the Radical SAM core domain; sequence FGHGTATFMI…EQAGMEMGFT (218 aa).

The protein belongs to the radical SAM superfamily. Lipoyl synthase family. [4Fe-4S] cluster is required as a cofactor.

Its subcellular location is the cytoplasm. It catalyses the reaction [[Fe-S] cluster scaffold protein carrying a second [4Fe-4S](2+) cluster] + N(6)-octanoyl-L-lysyl-[protein] + 2 oxidized [2Fe-2S]-[ferredoxin] + 2 S-adenosyl-L-methionine + 4 H(+) = [[Fe-S] cluster scaffold protein] + N(6)-[(R)-dihydrolipoyl]-L-lysyl-[protein] + 4 Fe(3+) + 2 hydrogen sulfide + 2 5'-deoxyadenosine + 2 L-methionine + 2 reduced [2Fe-2S]-[ferredoxin]. Its pathway is protein modification; protein lipoylation via endogenous pathway; protein N(6)-(lipoyl)lysine from octanoyl-[acyl-carrier-protein]: step 2/2. Functionally, catalyzes the radical-mediated insertion of two sulfur atoms into the C-6 and C-8 positions of the octanoyl moiety bound to the lipoyl domains of lipoate-dependent enzymes, thereby converting the octanoylated domains into lipoylated derivatives. The polypeptide is Lipoyl synthase (Hydrogenovibrio crunogenus (strain DSM 25203 / XCL-2) (Thiomicrospira crunogena)).